The primary structure comprises 365 residues: MKLSDFDFDLPSELIAQYPSSERDNSDLLIAVTPPIKTKFYNIIDYLKEGDLLVFNNSKVIKAQLNLGKNITINLNQKLSDDSWSAFAKPARKLHVNDEFYFDNHKVIITEKLAMGEIKVKFKLNDISVFEFLNKYGEMPLPVYIRRSHSLCHPVATTTGSKTYLNNDWIPWSNHGMTNTQNDNDRYQTVYSQIEGSVAAPTAGLHFTKDILDKLKAEGIQATFLTLHVGAGTFLPVKTENIHEHKMHTEYCSITPDTAEIINKAKQEGKRIIAVGTTTLRTLESSCNNGIVKAGSFKTDIFITPGFKFQTADMLLTNFHFPKSTLFMLICAFAGFKEMHELYKYAIKEAMRFFSYGDATLLCRK.

This sequence belongs to the QueA family. Monomer.

It localises to the cytoplasm. The catalysed reaction is 7-aminomethyl-7-carbaguanosine(34) in tRNA + S-adenosyl-L-methionine = epoxyqueuosine(34) in tRNA + adenine + L-methionine + 2 H(+). It participates in tRNA modification; tRNA-queuosine biosynthesis. Transfers and isomerizes the ribose moiety from AdoMet to the 7-aminomethyl group of 7-deazaguanine (preQ1-tRNA) to give epoxyqueuosine (oQ-tRNA). This Rickettsia rickettsii (strain Iowa) protein is S-adenosylmethionine:tRNA ribosyltransferase-isomerase.